The primary structure comprises 406 residues: FBD-associated F-box protein At1g60410 (406 aa).

The region spanning 9 to 59 is the F-box domain; it reads KDRLSDLPCHLLCRILSNLSTKESVRTSVLSPRWSNLWSLVSVLDLDFQDF. Residues 355 to 405 form the FBD domain; that stretch reads MEEIKLSPVPQCVLSSLDFLQLKAPSTPSKMKLATYFRKKCTRLTKMLLSG.

This Arabidopsis thaliana (Mouse-ear cress) protein is FBD-associated F-box protein At1g60410.